We begin with the raw amino-acid sequence, 339 residues long: Ketol-acid reductoisomerase (NADP(+)) (339 aa).

A KARI N-terminal Rossmann domain is found at 1-182 (MRVYYDRDAD…GGGRSGVIET (182 aa)). Residues 24–27 (YGSQ), Arg-48, Ser-51, Thr-53, and 83–86 (DELQ) each bind NADP(+). His-108 is an active-site residue. NADP(+) is bound at residue Gly-134. Positions 183–328 (TFKEECETDL…GKLRAMMPWI (146 aa)) constitute a KARI C-terminal knotted domain. Mg(2+)-binding residues include Asp-191, Glu-195, Glu-227, and Glu-231. Ser-252 provides a ligand contact to substrate.

It belongs to the ketol-acid reductoisomerase family. The cofactor is Mg(2+).

The enzyme catalyses (2R)-2,3-dihydroxy-3-methylbutanoate + NADP(+) = (2S)-2-acetolactate + NADPH + H(+). The catalysed reaction is (2R,3R)-2,3-dihydroxy-3-methylpentanoate + NADP(+) = (S)-2-ethyl-2-hydroxy-3-oxobutanoate + NADPH + H(+). Its pathway is amino-acid biosynthesis; L-isoleucine biosynthesis; L-isoleucine from 2-oxobutanoate: step 2/4. It participates in amino-acid biosynthesis; L-valine biosynthesis; L-valine from pyruvate: step 2/4. Involved in the biosynthesis of branched-chain amino acids (BCAA). Catalyzes an alkyl-migration followed by a ketol-acid reduction of (S)-2-acetolactate (S2AL) to yield (R)-2,3-dihydroxy-isovalerate. In the isomerase reaction, S2AL is rearranged via a Mg-dependent methyl migration to produce 3-hydroxy-3-methyl-2-ketobutyrate (HMKB). In the reductase reaction, this 2-ketoacid undergoes a metal-dependent reduction by NADPH to yield (R)-2,3-dihydroxy-isovalerate. The polypeptide is Ketol-acid reductoisomerase (NADP(+)) (Brucella suis (strain ATCC 23445 / NCTC 10510)).